We begin with the raw amino-acid sequence, 227 residues long: Urease accessory protein UreF (227 aa).

This sequence belongs to the UreF family. In terms of assembly, ureD, UreF and UreG form a complex that acts as a GTP-hydrolysis-dependent molecular chaperone, activating the urease apoprotein by helping to assemble the nickel containing metallocenter of UreC. The UreE protein probably delivers the nickel.

The protein resides in the cytoplasm. Its function is as follows. Required for maturation of urease via the functional incorporation of the urease nickel metallocenter. The polypeptide is Urease accessory protein UreF (Blochmanniella floridana).